A 303-amino-acid chain; its full sequence is NAD kinase (303 aa).

D71 functions as the Proton acceptor in the catalytic mechanism. NAD(+) contacts are provided by residues 71 to 72, 145 to 146, R156, R173, D175, 186 to 191, and Q245; these read DG, ND, and TGYSLS.

Belongs to the NAD kinase family. The cofactor is a divalent metal cation.

The protein localises to the cytoplasm. The enzyme catalyses NAD(+) + ATP = ADP + NADP(+) + H(+). Its function is as follows. Involved in the regulation of the intracellular balance of NAD and NADP, and is a key enzyme in the biosynthesis of NADP. Catalyzes specifically the phosphorylation on 2'-hydroxyl of the adenosine moiety of NAD to yield NADP. The chain is NAD kinase from Magnetococcus marinus (strain ATCC BAA-1437 / JCM 17883 / MC-1).